Consider the following 355-residue polypeptide: Galactoside 2-alpha-L-fucosyltransferase (355 aa).

Residues 1-15 lie on the Cytoplasmic side of the membrane; it reads MRNVKGLFSYMTKTK. The chain crosses the membrane as a helical; Signal-anchor for type II membrane protein span at residues 16–36; that stretch reads SFYISIIVIIFIIFIVNRMGP. Over 37 to 355 the chain is Lumenal; the sequence is RNYNYKQIGT…MSRNGSIISK (319 aa). Asn-92, Asn-311, and Asn-349 each carry an N-linked (GlcNAc...) asparagine glycan.

It belongs to the glycosyltransferase 11 family. In terms of tissue distribution, expression is restricted to the 20 intestinal cells in larvae and adult.

The protein localises to the golgi apparatus. Its subcellular location is the golgi stack membrane. It functions in the pathway protein modification; protein glycosylation. Selectively catalyzes the addition of fucose in alpha 1-2 linkage to Gal-beta-(1-&gt;4)-Xyl-beta-R, Gal-beta-(1-&gt;6)-GlcNAc-R, Gal-beta-(1-&gt;3)-Gal-beta-(1-&gt;4)-Glc and Gal-beta-(1-&gt;3)-Gal-beta-(1-&gt;4)-Xyl-R acceptors but not Gal-beta-(1-&gt;3)-GlcNAc-beta-(1-&gt;3)-Gal-beta-(1-&gt;4)-Glc. Unlike in mammals, unable to fucosylate Gal-beta-(1-&gt;4)-Glc-beta-R. The sequence is that of Galactoside 2-alpha-L-fucosyltransferase from Caenorhabditis elegans.